The primary structure comprises 142 residues: C-type lectin 13 (142 aa).

Residues 1-23 (MGRLVFVSFGGWDVFLSLSGTGA) form the signal peptide. Disulfide bonds link Cys-25/Cys-36, Cys-53/Cys-138, and Cys-115/Cys-130. The region spanning 32 to 139 (YEGHCYRVFQ…CSKTHNVVCK (108 aa)) is the C-type lectin domain.

Belongs to the snaclec family. In terms of assembly, heteromultimer; disulfide-linked. In terms of tissue distribution, expressed by the venom gland.

It is found in the secreted. Its function is as follows. Interferes with one step of hemostasis (modulation of platelet aggregation, or coagulation cascade, for example). The sequence is that of C-type lectin 13 from Crotalus adamanteus (Eastern diamondback rattlesnake).